Consider the following 263-residue polypeptide: uncharacterized protein (263 aa).

An NADP(+)-binding site is contributed by 13-20; the sequence is TGSTSGIG. Ser141 contacts substrate. Tyr154 (proton acceptor) is an active-site residue.

This sequence belongs to the short-chain dehydrogenases/reductases (SDR) family.

This is an uncharacterized protein from Bacillus subtilis (strain 168).